A 231-amino-acid chain; its full sequence is Ion-translocating oxidoreductase complex subunit E (231 aa).

7 helical membrane-spanning segments follow: residues 18–38 (GLVQLLGLCPLLAVTATITNA), 39–59 (LGLGVATLLVLIGSNVLVSLV), 69–89 (IPVFVMIIAALVTCVQLLINA), 93–113 (NLYLSLGIFLPLIVTNCVIIG), 127–147 (SAFDGLMMGLGFTAVLVVLGA), 157–177 (LFGGADLLLGDWASVLTIHVW), and 182–202 (PFLLAMLPPGAFIGMGLLIAL).

The protein belongs to the NqrDE/RnfAE family. The complex is composed of six subunits: RnfA, RnfB, RnfC, RnfD, RnfE and RnfG.

It is found in the cell inner membrane. In terms of biological role, part of a membrane-bound complex that couples electron transfer with translocation of ions across the membrane. This is Ion-translocating oxidoreductase complex subunit E from Shewanella frigidimarina (strain NCIMB 400).